The primary structure comprises 107 residues: Iron-sulfur cluster assembly protein CyaY (107 aa).

This sequence belongs to the frataxin family.

Functionally, involved in iron-sulfur (Fe-S) cluster assembly. May act as a regulator of Fe-S biogenesis. This chain is Iron-sulfur cluster assembly protein CyaY, found in Enterobacter sp. (strain 638).